A 471-amino-acid chain; its full sequence is Secretogranin-3 (471 aa).

The signal sequence occupies residues 1–22 (MGFLWTGSWILVLVLNSGPIQA). Disordered regions lie at residues 24–73 (PKPE…SNFS), 92–145 (KAKQ…HQLD), 208–231 (ANNY…KIPE), and 345–405 (KLEK…DEAK). A compositionally biased stretch (basic and acidic residues) spans 28 to 45 (GSQDKSLHNRELSAERPL). Residue Ser40 is modified to Phosphoserine. The O-linked (Xyl...) (chondroitin sulfate) serine glycan is linked to Ser40. Positions 62–73 (PSESKPSESNFS) are enriched in low complexity. Basic and acidic residues-rich tracts occupy residues 106–142 (LNVD…DGLH), 214–231 (APEK…KIPE), 345–355 (KLEKNTTDSKS), and 363–405 (EKSH…DEAK). Ser365 is modified (phosphoserine).

Interacts with CHGA. Interacts with secretogranin II/SCG2. Interacts (via C-terminus) with CPE. As to expression, expression restricted to the brain and pituitary gland. Not detected in the adrenal gland.

The protein localises to the cytoplasmic vesicle. Its subcellular location is the secretory vesicle. It localises to the secretory vesicle membrane. It is found in the secreted. In terms of biological role, member of the granin protein family that regulates the biogenesis of secretory granules. Acts as a sorting receptor for intragranular proteins including chromogranin A/CHGA. May also play a role in angiogenesis. Promotes endothelial proliferation, migration and tube formation through MEK/ERK signaling pathway. This Rattus norvegicus (Rat) protein is Secretogranin-3 (Scg3).